The following is a 320-amino-acid chain: Probable cell division protein WhiA (320 aa).

A DNA-binding region (H-T-H motif) is located at residues 276–310 (TLKELGEMVESGKVSKSGVNHRLRKIDELAEKLRA).

Belongs to the WhiA family.

In terms of biological role, involved in cell division and chromosome segregation. The chain is Probable cell division protein WhiA from Halalkalibacterium halodurans (strain ATCC BAA-125 / DSM 18197 / FERM 7344 / JCM 9153 / C-125) (Bacillus halodurans).